A 386-amino-acid polypeptide reads, in one-letter code: Adiponectin receptor protein 2 (386 aa).

The tract at residues 1-72 is disordered; that stretch reads MNEPAKHRLG…ECHDDNSQED (72 aa). Over 1-147 the chain is Cytoplasmic; the sequence is MNEPAKHRLG…SIFRIHTETG (147 aa). Over residues 15 to 31 the composition is skewed to basic and acidic residues; that stretch reads PEPDIRLRKGHQLDDTR. The span at 58–72 shows a compositional bias: acidic residues; it reads SPEEPECHDDNSQED. A helical membrane pass occupies residues 148-168; the sequence is NIWTHLLGCVFFLCLGIFYMF. Residues 169 to 181 lie on the Extracellular side of the membrane; that stretch reads RPNISFVAPLQEK. A helical membrane pass occupies residues 182–202; it reads VVFGLFFLGAILCLSFSWLFH. Position 202 (H202) interacts with Zn(2+). The Cytoplasmic portion of the chain corresponds to 203–213; that stretch reads TVYCHSEGVSR. A helical transmembrane segment spans residues 214-234; that stretch reads LFSKLDYSGIALLIMGSFVPW. The Extracellular portion of the chain corresponds to 235–245; sequence LYYSFYCNPQP. A helical transmembrane segment spans residues 246-266; the sequence is CFIYLIVICVLGIAAIIVSQW. The Cytoplasmic portion of the chain corresponds to 267–273; sequence DMFATPQ. Residues 274 to 294 form a helical membrane-spanning segment; it reads YRGVRAGVFVGLGLSGIIPTL. Over 295–309 the chain is Extracellular; that stretch reads HYVISEGFLKAATIG. A helical membrane pass occupies residues 310 to 330; the sequence is QIGWLMLMASLYITGAALYAA. Topologically, residues 331 to 348 are cytoplasmic; the sequence is RIPERFFPGKCDIWFHSH. 2 residues coordinate Zn(2+): H348 and H352. The helical transmembrane segment at 349 to 369 threads the bilayer; that stretch reads QLFHIFVVAGAFVHFHGVSNL. Residues 370-386 lie on the Extracellular side of the membrane; it reads QEFRFMIGGGCTEEDAL.

Belongs to the ADIPOR family. May form homooligomers and heterooligomers with ADIPOR1. Interacts with APPL2 (via BAR domain); ADIPOQ dissociates this interaction. As to expression, detected in liver and quadriceps muscle (at protein level). Highly expressed in liver. Highly expressed in white adipose tissue, and at intermediate levels in brown adipose tissue. Expressed at intermediate level in heart, kidney, lung and skeletal muscle. Weakly expressed in brain, spleen and testis.

It localises to the cell membrane. Its function is as follows. Receptor for ADIPOQ, an essential hormone secreted by adipocytes that regulates glucose and lipid metabolism. Required for normal body fat and glucose homeostasis. ADIPOQ-binding activates a signaling cascade that leads to increased PPARA activity, and ultimately to increased fatty acid oxidation and glucose uptake. Has intermediate affinity for globular and full-length adiponectin. Required for normal revascularization after chronic ischemia caused by severing of blood vessels. This Mus musculus (Mouse) protein is Adiponectin receptor protein 2.